The following is a 369-amino-acid chain: Aspartate-semialdehyde dehydrogenase (369 aa).

Residues 11–14 (RGMV), 38–39 (TS), and Gln-75 each bind NADP(+). Residue Arg-104 participates in phosphate binding. Catalysis depends on Cys-137, which acts as the Acyl-thioester intermediate. Gln-164 is a binding site for substrate. Residues 167–168 (SG) and Pro-195 contribute to the NADP(+) site. Glu-243 provides a ligand contact to substrate. Lys-246 lines the phosphate pocket. Arg-269 is a binding site for substrate. The Proton acceptor role is filled by His-276. Gln-352 serves as a coordination point for NADP(+).

Belongs to the aspartate-semialdehyde dehydrogenase family. As to quaternary structure, homodimer.

The catalysed reaction is L-aspartate 4-semialdehyde + phosphate + NADP(+) = 4-phospho-L-aspartate + NADPH + H(+). The protein operates within amino-acid biosynthesis; L-lysine biosynthesis via DAP pathway; (S)-tetrahydrodipicolinate from L-aspartate: step 2/4. Its pathway is amino-acid biosynthesis; L-methionine biosynthesis via de novo pathway; L-homoserine from L-aspartate: step 2/3. It functions in the pathway amino-acid biosynthesis; L-threonine biosynthesis; L-threonine from L-aspartate: step 2/5. Its function is as follows. Catalyzes the NADPH-dependent formation of L-aspartate-semialdehyde (L-ASA) by the reductive dephosphorylation of L-aspartyl-4-phosphate. This chain is Aspartate-semialdehyde dehydrogenase, found in Buchnera aphidicola subsp. Baizongia pistaciae (strain Bp).